Reading from the N-terminus, the 341-residue chain is Ketol-acid reductoisomerase (NADP(+)) (341 aa).

One can recognise a KARI N-terminal Rossmann domain in the interval 2–181; sequence AKVYYNGDAN…GAARAGVLET (180 aa). Residues 25–28, R48, S52, and 82–85 contribute to the NADP(+) site; these read YGSQ and DEKQ. Residue H107 is part of the active site. An NADP(+)-binding site is contributed by G133. The KARI C-terminal knotted domain occupies 182-327; sequence TFKEETETDL…RELRSMMPFV (146 aa). Mg(2+) contacts are provided by D190, E194, E226, and E230. Substrate is bound at residue S251.

This sequence belongs to the ketol-acid reductoisomerase family. Requires Mg(2+) as cofactor.

It carries out the reaction (2R)-2,3-dihydroxy-3-methylbutanoate + NADP(+) = (2S)-2-acetolactate + NADPH + H(+). The enzyme catalyses (2R,3R)-2,3-dihydroxy-3-methylpentanoate + NADP(+) = (S)-2-ethyl-2-hydroxy-3-oxobutanoate + NADPH + H(+). Its pathway is amino-acid biosynthesis; L-isoleucine biosynthesis; L-isoleucine from 2-oxobutanoate: step 2/4. It participates in amino-acid biosynthesis; L-valine biosynthesis; L-valine from pyruvate: step 2/4. Involved in the biosynthesis of branched-chain amino acids (BCAA). Catalyzes an alkyl-migration followed by a ketol-acid reduction of (S)-2-acetolactate (S2AL) to yield (R)-2,3-dihydroxy-isovalerate. In the isomerase reaction, S2AL is rearranged via a Mg-dependent methyl migration to produce 3-hydroxy-3-methyl-2-ketobutyrate (HMKB). In the reductase reaction, this 2-ketoacid undergoes a metal-dependent reduction by NADPH to yield (R)-2,3-dihydroxy-isovalerate. The chain is Ketol-acid reductoisomerase (NADP(+)) from Geobacillus kaustophilus (strain HTA426).